Consider the following 162-residue polypeptide: Serine-protein kinase RsbW (162 aa).

Belongs to the anti-sigma-factor family.

The enzyme catalyses L-seryl-[protein] + ATP = O-phospho-L-seryl-[protein] + ADP + H(+). It catalyses the reaction L-threonyl-[protein] + ATP = O-phospho-L-threonyl-[protein] + ADP + H(+). Functionally, negative regulator of sigma-B activity. Phosphorylates and inactivates its specific antagonist protein, RsbV. Upon phosphorylation of RsbV, RsbW is released and binds to sigma-B, thereby blocking its ability to form an RNA polymerase holoenzyme (E-sigma-B). This chain is Serine-protein kinase RsbW, found in Halalkalibacterium halodurans (strain ATCC BAA-125 / DSM 18197 / FERM 7344 / JCM 9153 / C-125) (Bacillus halodurans).